We begin with the raw amino-acid sequence, 164 residues long: MTPVRLGILTAVIALALDQATKLWLLYGFELARKGVVPVTSFFDLVLAWNTGISYGWFAGQGPTGQILMLAFKAVAIVALAIWMARSTTKLATIGLGLIIGGAIGNAIDRLAYGAVVDFALFHVEIAGKTYNWYVFNIADVAIVVGVVALLYDSLIGAPAVKAP.

Transmembrane regions (helical) follow at residues 6-26 (LGIL…LWLL), 39-59 (VTSF…GWFA), 65-85 (GQIL…IWMA), and 88-108 (TTKL…GNAI). Catalysis depends on residues D118 and D140. The helical transmembrane segment at 141–161 (VAIVVGVVALLYDSLIGAPAV) threads the bilayer.

The protein belongs to the peptidase A8 family.

Its subcellular location is the cell inner membrane. The enzyme catalyses Release of signal peptides from bacterial membrane prolipoproteins. Hydrolyzes -Xaa-Yaa-Zaa-|-(S,diacylglyceryl)Cys-, in which Xaa is hydrophobic (preferably Leu), and Yaa (Ala or Ser) and Zaa (Gly or Ala) have small, neutral side chains.. It functions in the pathway protein modification; lipoprotein biosynthesis (signal peptide cleavage). In terms of biological role, this protein specifically catalyzes the removal of signal peptides from prolipoproteins. This chain is Lipoprotein signal peptidase, found in Rhodopseudomonas palustris (strain TIE-1).